The chain runs to 511 residues: Coiled-coil domain-containing protein 125 (511 aa).

The segment covering Met1 to Asp12 has biased composition (polar residues). The disordered stretch occupies residues Met1–Asn110. A compositionally biased stretch (basic and acidic residues) spans Glu43–Gly54. Residues Gln83–Leu108 show a composition bias toward polar residues. Coiled-coil stretches lie at residues Asn105–Leu243 and Arg293–Ala325. A Phosphoserine modification is found at Ser504.

The protein resides in the cytoplasm. May be involved in the regulation of cell migration. This Homo sapiens (Human) protein is Coiled-coil domain-containing protein 125 (CCDC125).